The primary structure comprises 133 residues: Small ribosomal subunit protein uS9 (133 aa).

A compositionally biased stretch (basic and acidic residues) spans 102–113; it reads KVEGYLSRDPRA. The interval 102 to 133 is disordered; the sequence is KVEGYLSRDPRAKERRKYGLKKARKAPQFSKR. Over residues 114-133 the composition is skewed to basic residues; that stretch reads KERRKYGLKKARKAPQFSKR.

Belongs to the universal ribosomal protein uS9 family.

This is Small ribosomal subunit protein uS9 from Gloeobacter violaceus (strain ATCC 29082 / PCC 7421).